The following is a 1203-amino-acid chain: Cingulin (1203 aa).

Residues 7–357 (MAEPRGPVDH…VMISSGSTKA (351 aa)) form a head region. The tract at residues 25–48 (EPVSGAEMGTLRRGGRRPAKDARA) is disordered. Positions 48–62 (ASTYGVAVRVQGIAG) match the ZIM motif. Residues 54–67 (AVRVQGIAGQPFVV) are interaction with TJP1/ZO1. Residues 89–268 (EASGALGSDF…PPSGFSRSRQ (180 aa)) form a disordered region. Residues S96, S135, S137, S140, S155, and S165 each carry the phosphoserine modification. A compositionally biased stretch (polar residues) spans 166–191 (PGSTIDTAPLSSVDSLINKFDSQLGG). The span at 207–231 (EQRKRSKSLDSRLPRDTLEERERQS) shows a compositional bias: basic and acidic residues. 6 positions are modified to phosphoserine: S214, S217, S258, S276, S338, and S351. The segment covering 246-267 (GSSKQPSQSQSPSPPSGFSRSR) has biased composition (low complexity). A coiled-coil region spans residues 358 to 1160 (VAGQGELTRK…SLEKDSWRKA (803 aa)). The residue at position 579 (K579) is an N6-acetyllysine. Over residues 883-903 (ARREVADAQRQAKDWASEAEK) the composition is skewed to basic and acidic residues. Disordered stretches follow at residues 883 to 908 (ARREVADAQRQAKDWASEAEKTSGGL) and 1160 to 1181 (ASRSAAESALKHEGLSSDEEFD). The tract at residues 1161–1203 (SRSAAESALKHEGLSSDEEFDSVYDPSSIASLLTESNLQTSSC) is tail. A phosphoserine mark is found at S1175, S1176, and S1182.

This sequence belongs to the cingulin family. Homodimer. Interacts with TJP1/ZO1 and SPEF1.

It is found in the cell junction. It localises to the tight junction. Its function is as follows. Probably plays a role in the formation and regulation of the tight junction (TJ) paracellular permeability barrier. This chain is Cingulin, found in Papio anubis (Olive baboon).